A 105-amino-acid polypeptide reads, in one-letter code: Large ribosomal subunit protein eL42 (105 aa).

The segment at 23–52 (KVTQYKKGKESRLAQGRRRYDSKQKGFGGQ) is disordered. Residues 29–46 (KGKESRLAQGRRRYDSKQ) show a composition bias toward basic and acidic residues.

Belongs to the eukaryotic ribosomal protein eL42 family.

This is Large ribosomal subunit protein eL42 (rpl-44) from Brugia malayi (Filarial nematode worm).